We begin with the raw amino-acid sequence, 318 residues long: Probable serine/threonine-protein kinase MRK1 homolog (318 aa).

Residues 40-313 (YRYVEMIGRG…ASELLRKQFF (274 aa)) enclose the Protein kinase domain. Residues 46–54 (IGRGSFGVV) and K68 each bind ATP. D159 functions as the Proton acceptor in the catalytic mechanism.

It belongs to the protein kinase superfamily. CMGC Ser/Thr protein kinase family. GSK-3 subfamily.

The protein resides in the cytoplasm. Its subcellular location is the nucleus. It carries out the reaction L-seryl-[protein] + ATP = O-phospho-L-seryl-[protein] + ADP + H(+). The catalysed reaction is L-threonyl-[protein] + ATP = O-phospho-L-threonyl-[protein] + ADP + H(+). Its function is as follows. May play a role in the initiation and completion of mitosis. This Encephalitozoon cuniculi (strain GB-M1) (Microsporidian parasite) protein is Probable serine/threonine-protein kinase MRK1 homolog (MRK1).